A 271-amino-acid polypeptide reads, in one-letter code: tRNA pseudouridine synthase A (271 aa).

Asp-56 acts as the Nucleophile in catalysis. Tyr-120 contacts substrate.

It belongs to the tRNA pseudouridine synthase TruA family. As to quaternary structure, homodimer.

The catalysed reaction is uridine(38/39/40) in tRNA = pseudouridine(38/39/40) in tRNA. Its function is as follows. Formation of pseudouridine at positions 38, 39 and 40 in the anticodon stem and loop of transfer RNAs. The protein is tRNA pseudouridine synthase A of Janthinobacterium sp. (strain Marseille) (Minibacterium massiliensis).